Consider the following 431-residue polypeptide: Adenylosuccinate synthetase (431 aa).

GTP contacts are provided by residues 13–19 (GDEGKGK) and 41–43 (GHT). Catalysis depends on D14, which acts as the Proton acceptor. 2 residues coordinate Mg(2+): D14 and G41. IMP-binding positions include 14-17 (DEGK), 39-42 (NAGH), T130, R144, Q225, T240, and R304. The active-site Proton donor is H42. Residue 300–306 (AVTGRPR) participates in substrate binding. GTP contacts are provided by residues R306, 332-334 (KLD), and 415-417 (STG).

Belongs to the adenylosuccinate synthetase family. As to quaternary structure, homodimer. Mg(2+) serves as cofactor.

The protein localises to the cytoplasm. It carries out the reaction IMP + L-aspartate + GTP = N(6)-(1,2-dicarboxyethyl)-AMP + GDP + phosphate + 2 H(+). The protein operates within purine metabolism; AMP biosynthesis via de novo pathway; AMP from IMP: step 1/2. Functionally, plays an important role in the de novo pathway of purine nucleotide biosynthesis. Catalyzes the first committed step in the biosynthesis of AMP from IMP. The chain is Adenylosuccinate synthetase from Legionella pneumophila subsp. pneumophila (strain Philadelphia 1 / ATCC 33152 / DSM 7513).